The chain runs to 89 residues: Small ribosomal subunit protein uS15 (89 aa).

This sequence belongs to the universal ribosomal protein uS15 family. In terms of assembly, part of the 30S ribosomal subunit. Forms a bridge to the 50S subunit in the 70S ribosome, contacting the 23S rRNA.

Functionally, one of the primary rRNA binding proteins, it binds directly to 16S rRNA where it helps nucleate assembly of the platform of the 30S subunit by binding and bridging several RNA helices of the 16S rRNA. Its function is as follows. Forms an intersubunit bridge (bridge B4) with the 23S rRNA of the 50S subunit in the ribosome. The chain is Small ribosomal subunit protein uS15 from Streptococcus agalactiae serotype Ia (strain ATCC 27591 / A909 / CDC SS700).